Consider the following 262-residue polypeptide: tRNA pseudouridine synthase A (262 aa).

The active-site Nucleophile is D51. Y109 is a binding site for substrate.

It belongs to the tRNA pseudouridine synthase TruA family. Homodimer.

The enzyme catalyses uridine(38/39/40) in tRNA = pseudouridine(38/39/40) in tRNA. In terms of biological role, formation of pseudouridine at positions 38, 39 and 40 in the anticodon stem and loop of transfer RNAs. The polypeptide is tRNA pseudouridine synthase A (Actinobacillus pleuropneumoniae serotype 7 (strain AP76)).